The sequence spans 218 residues: Adenylate kinase (218 aa).

10-15 serves as a coordination point for ATP; the sequence is GAGKGT. The segment at 30–59 is NMP; sequence STGDMIRETIKSGSVLGQELKKVLDAGELV. Residues T31, R36, 57–59, and Q92 contribute to the AMP site; that span reads ELV. An LID region spans residues 122–159; that stretch reads GRRIHPASGRTYHTKFNPPKVADKDDVTGEPLITRTDD. ATP contacts are provided by residues R123 and 132–133; that span reads TY. AMP-binding residues include R156 and R167. Q202 contacts ATP.

The protein belongs to the adenylate kinase family. Monomer.

Its subcellular location is the cytoplasm. It catalyses the reaction AMP + ATP = 2 ADP. It functions in the pathway purine metabolism; AMP biosynthesis via salvage pathway; AMP from ADP: step 1/1. Functionally, catalyzes the reversible transfer of the terminal phosphate group between ATP and AMP. Plays an important role in cellular energy homeostasis and in adenine nucleotide metabolism. The sequence is that of Adenylate kinase from Francisella tularensis subsp. holarctica (strain LVS).